The sequence spans 320 residues: MILVYNRIRSIISSSLGRIHVRYNSNSQNRWLNRQLKDPYTKEAKVQNLRSRAAFKLMQIDDKYRLFSKNRTDQRILDLGYAPGAWSQVARQRSSPNSMILGVDILPCEPPHGVNSIQANILAKRTHDLIRLFFSKHFQLNRHDDLHKDHGYFQNMLEEELTHVKDTELYREIFTSDDIYETPNTNSTLIEREKFPVDVIISDMYEPWPQTTGFWNNITNQAYFRMANTSGVSIRDHYQSIDLCDAALVTAIDLLRPLGSFVCKLYTGEEENLFKKRMQAVFTNVHKFKPDASRDESKETYYIGLKKKRNVDKLDVFSNS.

The transit peptide at 1–18 (MILVYNRIRSIISSSLGR) directs the protein to the mitochondrion. S-adenosyl-L-methionine contacts are provided by residues 83 to 86 (PGAW), aspartate 104, 178 to 179 (DI), and aspartate 203. Lysine 264 acts as the Proton acceptor in catalysis.

The protein belongs to the class I-like SAM-binding methyltransferase superfamily. RNA methyltransferase RlmE family.

It localises to the mitochondrion. It carries out the reaction uridine(2791) in 21S rRNA + S-adenosyl-L-methionine = 2'-O-methyluridine(2791) in 21S rRNA + S-adenosyl-L-homocysteine + H(+). Its function is as follows. S-adenosyl-L-methionine-dependent 2'-O-ribose methyltransferase that catalyzes the formation of 2'-O-methyluridine at position 2791 (Um2791) in the 21S mitochondrial large subunit ribosomal RNA (mtLSU rRNA), a universally conserved modification in the peptidyl transferase domain of the mtLSU rRNA. This is rRNA methyltransferase 2, mitochondrial from Saccharomyces cerevisiae (strain ATCC 204508 / S288c) (Baker's yeast).